Consider the following 149-residue polypeptide: MNQSLTLAFLIAAGIGLVVQNTLMVRITQTSSTILIAMLLNSLVGIVLFVSILWFKQGMAGFGELVSSVRWWTLIPGLLGSFFVFASISGYQNVGAATTIAVLVASQLIGGLMLDIFRSHGVPLRALFGPICGAILLVVGAWLVARRSF.

Residues 1–4 (MNQS) are Periplasmic-facing. Residues 5–25 (LTLAFLIAAGIGLVVQNTLMV) form a helical membrane-spanning segment. Residues 26–33 (RITQTSST) lie on the Cytoplasmic side of the membrane. Residues 34–54 (ILIAMLLNSLVGIVLFVSILW) traverse the membrane as a helical segment. Residues 55–70 (FKQGMAGFGELVSSVR) lie on the Periplasmic side of the membrane. A helical membrane pass occupies residues 71-91 (WWTLIPGLLGSFFVFASISGY). Residues 92 to 93 (QN) are Cytoplasmic-facing. The helical transmembrane segment at 94–114 (VGAATTIAVLVASQLIGGLML) threads the bilayer. The Periplasmic portion of the chain corresponds to 115–123 (DIFRSHGVP). Residues 124-144 (LRALFGPICGAILLVVGAWLV) traverse the membrane as a helical segment. The Cytoplasmic segment spans residues 145–149 (ARRSF).

It localises to the cell inner membrane. This Escherichia coli (strain K12) protein is Inner membrane protein YdcZ (ydcZ).